Here is a 456-residue protein sequence, read N- to C-terminus: MIKRQKLKYKWMLITTLITFTTILLFCLIIIFFLKDTLRSSEIDEAERSSNDIANLFHSKSLSDISALDLNASLENFQEILIYDDKGRKLIQTSNDNTLAYDNKIDFKHPERIHIHRSHGINYLVITEPIRSKEFSGYSVLVHSLQNYDNLVKSLYIVALAFGLIATIITAGVSYIFSSQITKPIVTMSNKMNQIRRDGFQNKLELTTNYEETDNLIDTFNEMMYQIEESFNQQRQFVEDASHELRTPLQIIQGHLNLIQRWGKKDPAVLEESLNISIEEVNRITKLVEELLLLTKDRVNHNVLECENVDINSEIQSRVKSLQHLHPDYTFETHLATKPIQLKINRHQFEQLLLIFIDNAMKYDTEHKHIKIVTQLKNKMIMIDITDHGMGIPKADLEFIFDRFYRVDKSRARSQGGNGLGLSIAEKIVQLNGGMIQVESELQNYTTFKISFPVLN.

2 helical membrane-spanning segments follow: residues Leu-13–Phe-33 and Ile-157–Phe-177. Positions Ser-179–Asn-232 constitute an HAMP domain. A Histidine kinase domain is found at Asp-240–Asn-456. The residue at position 243 (His-243) is a Phosphohistidine; by autocatalysis.

In terms of processing, autophosphorylated.

The protein resides in the cell membrane. The catalysed reaction is ATP + protein L-histidine = ADP + protein N-phospho-L-histidine.. Functionally, member of the two-component regulatory system ArlS/ArlR. ArlS probably functions as a sensor protein kinase which is autophosphorylated at a histidine residue and transfers its phosphate group to ArlR. In Staphylococcus epidermidis (strain ATCC 35984 / DSM 28319 / BCRC 17069 / CCUG 31568 / BM 3577 / RP62A), this protein is Signal transduction histidine-protein kinase ArlS (arlS).